The sequence spans 95 residues: Protein TusB (95 aa).

It belongs to the DsrH/TusB family. As to quaternary structure, heterohexamer, formed by a dimer of trimers. The hexameric TusBCD complex contains 2 copies each of TusB, TusC and TusD. The TusBCD complex interacts with TusE.

The protein resides in the cytoplasm. Part of a sulfur-relay system required for 2-thiolation of 5-methylaminomethyl-2-thiouridine (mnm(5)s(2)U) at tRNA wobble positions. The chain is Protein TusB from Escherichia coli (strain ATCC 8739 / DSM 1576 / NBRC 3972 / NCIMB 8545 / WDCM 00012 / Crooks).